A 340-amino-acid polypeptide reads, in one-letter code: Glycerol-3-phosphate dehydrogenase [NAD(P)+] (340 aa).

Residues Ser-12, Trp-13, Lys-34, and Lys-107 each coordinate NADPH. Sn-glycerol 3-phosphate-binding residues include Lys-107, Gly-138, and Ser-140. Position 142 (Ala-142) interacts with NADPH. Residues Lys-193, Asp-246, Ser-256, Arg-257, and Asn-258 each coordinate sn-glycerol 3-phosphate. The Proton acceptor role is filled by Lys-193. Arg-257 contacts NADPH. Residues Ile-281 and Glu-283 each contribute to the NADPH site.

Belongs to the NAD-dependent glycerol-3-phosphate dehydrogenase family.

The protein localises to the cytoplasm. It catalyses the reaction sn-glycerol 3-phosphate + NAD(+) = dihydroxyacetone phosphate + NADH + H(+). The catalysed reaction is sn-glycerol 3-phosphate + NADP(+) = dihydroxyacetone phosphate + NADPH + H(+). It functions in the pathway membrane lipid metabolism; glycerophospholipid metabolism. Catalyzes the reduction of the glycolytic intermediate dihydroxyacetone phosphate (DHAP) to sn-glycerol 3-phosphate (G3P), the key precursor for phospholipid synthesis. This Enterococcus faecalis (strain ATCC 700802 / V583) protein is Glycerol-3-phosphate dehydrogenase [NAD(P)+].